Reading from the N-terminus, the 956-residue chain is Pyruvate, phosphate dikinase, chloroplastic (956 aa).

The transit peptide at 1-79 (MMSSLFVEGM…AVLNPVSPPV (79 aa)) directs the protein to the chloroplast. Residue Thr-536 is modified to Phosphothreonine; by PDRP1. His-538 functions as the Tele-phosphohistidine intermediate in the catalytic mechanism. Substrate is bound by residues Arg-644, Arg-701, Glu-830, Gly-851, Thr-852, Asn-853, and Asp-854. Glu-830 serves as a coordination point for Mg(2+). Asp-854 is a binding site for Mg(2+). Cys-916 acts as the Proton donor in catalysis.

It belongs to the PEP-utilizing enzyme family. Homotetramer. It depends on Mg(2+) as a cofactor. In terms of processing, phosphorylation of Thr-536 in the dark inactivates the enzyme. Dephosphorylation upon light stimulation reactivates the enzyme.

Its subcellular location is the plastid. The protein localises to the chloroplast. It catalyses the reaction pyruvate + phosphate + ATP = phosphoenolpyruvate + AMP + diphosphate + H(+). Its activity is regulated as follows. Activated by light-induced dephosphorylation. Inhibited by dark-induced phosphorylation. Both reactions are catalyzed by PDRP1. Its function is as follows. Formation of phosphoenolpyruvate. The polypeptide is Pyruvate, phosphate dikinase, chloroplastic (PPDK) (Flaveria pringlei).